We begin with the raw amino-acid sequence, 185 residues long: Transmembrane protein 252 (185 aa).

Helical transmembrane passes span 8–28 (VLCA…GFFI) and 39–59 (LVVA…GIFW). A disordered region spans residues 125-149 (YTETSLEPQDKDKNDPQPEAPPPYP).

Its subcellular location is the membrane. This is Transmembrane protein 252 (Tmem252) from Rattus norvegicus (Rat).